The sequence spans 297 residues: Large ribosomal subunit protein uL18 (297 aa).

A compositionally biased stretch (basic residues) spans 258–267 (KKAHPKKRWT). The tract at residues 258 to 277 (KKAHPKKRWTEKKLTREQRQ) is disordered. The segment covering 268–277 (EKKLTREQRQ) has biased composition (basic and acidic residues).

The protein belongs to the universal ribosomal protein uL18 family. Component of the large ribosomal subunit (LSU).

The protein resides in the cytoplasm. The protein localises to the nucleus. Functionally, component of the ribosome, a large ribonucleoprotein complex responsible for the synthesis of proteins in the cell. The small ribosomal subunit (SSU) binds messenger RNAs (mRNAs) and translates the encoded message by selecting cognate aminoacyl-transfer RNA (tRNA) molecules. The large subunit (LSU) contains the ribosomal catalytic site termed the peptidyl transferase center (PTC), which catalyzes the formation of peptide bonds, thereby polymerizing the amino acids delivered by tRNAs into a polypeptide chain. The nascent polypeptides leave the ribosome through a tunnel in the LSU and interact with protein factors that function in enzymatic processing, targeting, and the membrane insertion of nascent chains at the exit of the ribosomal tunnel. This Helianthus annuus (Common sunflower) protein is Large ribosomal subunit protein uL18 (RPL5A).